Here is a 366-residue protein sequence, read N- to C-terminus: L-tyrosine C(3)-methyltransferase (366 aa).

The span at Met-1 to Gln-12 shows a compositional bias: polar residues. The segment at Met-1–Lys-22 is disordered. Glu-223 lines the S-adenosyl-L-methionine pocket.

The protein belongs to the class I-like SAM-binding methyltransferase superfamily. Cation-independent O-methyltransferase family.

The catalysed reaction is L-tyrosine + S-adenosyl-L-methionine = 3-methyl-L-tyrosine + S-adenosyl-L-homocysteine + H(+). It functions in the pathway antibiotic biosynthesis. Its function is as follows. C-methyltransferase that mediates the methylation of tyrosine into 3-methyl-L-tyrosine (3-Me-Tyr) in biosynthesis of saframycin A, a potent antitumor antibiotic that belongs to the tetrahydroisoquinoline family. Involved in biosynthesis of 3-hydroxy-5-methyl-O-methyltyrosine (3-OH-5-Me-OMe-Tyr), a core structure of saframycin A. This chain is L-tyrosine C(3)-methyltransferase, found in Streptomyces lavendulae.